The sequence spans 455 residues: Ribulose bisphosphate carboxylase large chain (455 aa).

Residue lysine 5 is modified to N6,N6,N6-trimethyllysine. 2 residues coordinate substrate: asparagine 114 and threonine 164. The Proton acceptor role is filled by lysine 166. Lysine 168 provides a ligand contact to substrate. Lysine 192, aspartate 194, and glutamate 195 together coordinate Mg(2+). An N6-carboxylysine modification is found at lysine 192. The Proton acceptor role is filled by histidine 285. 3 residues coordinate substrate: arginine 286, histidine 318, and serine 370.

It belongs to the RuBisCO large chain family. Type I subfamily. As to quaternary structure, heterohexadecamer of 8 large chains and 8 small chains; disulfide-linked. The disulfide link is formed within the large subunit homodimers. It depends on Mg(2+) as a cofactor. In terms of processing, the disulfide bond which can form in the large chain dimeric partners within the hexadecamer appears to be associated with oxidative stress and protein turnover.

It is found in the plastid. The protein resides in the chloroplast. The catalysed reaction is 2 (2R)-3-phosphoglycerate + 2 H(+) = D-ribulose 1,5-bisphosphate + CO2 + H2O. It catalyses the reaction D-ribulose 1,5-bisphosphate + O2 = 2-phosphoglycolate + (2R)-3-phosphoglycerate + 2 H(+). RuBisCO catalyzes two reactions: the carboxylation of D-ribulose 1,5-bisphosphate, the primary event in carbon dioxide fixation, as well as the oxidative fragmentation of the pentose substrate in the photorespiration process. Both reactions occur simultaneously and in competition at the same active site. This is Ribulose bisphosphate carboxylase large chain from Lupinus nanus (Sky lupine).